The sequence spans 404 residues: CD209 antigen (404 aa).

Over 1–37 the chain is Cytoplasmic; sequence MSDSKEPRLQQLDLLEEEQLGGVGFRQTRGYKSLAGC. Short sequence motifs (endocytosis signal) lie at residues 14–15, 16–18, and 31–34; these read LL, EEE, and YKSL. Residues 38–58 traverse the membrane as a helical; Signal-anchor for type II membrane protein segment; it reads LGHGPLVLQLLSFTLLAGLLV. Residues 59–404 lie on the Extracellular side of the membrane; that stretch reads QVSKVPSSLS…APTTPNPPPA (346 aa). N-linked (GlcNAc...) asparagine glycosylation occurs at Asn80. A run of 7 repeats spans residues 96-118, 119-141, 142-164, 165-187, 188-210, 211-233, and 234-257. Residues 96–257 form a 7 X approximate tandem repeats region; it reads KQQEIYQELT…AVERLCHPCP (162 aa). Disulfide bonds link Cys256-Cys267, Cys284-Cys377, and Cys356-Cys369. Residues 263–378 form the C-type lectin domain; sequence FQGNCYFMSN…CNLAKFWICK (116 aa). Residues Glu347, Asn349, Ile351, Glu354, Asn365, and Asp366 each coordinate Ca(2+). The interval 382–404 is disordered; the sequence is ASCSGDEERLLSPAPTTPNPPPA.

In terms of assembly, homotetramer. Interacts with C1QBP; the interaction is indicative for a C1q:C1QBP:CD209 signaling complex. Interacts with ICAM2 and ICAM3 by binding to mannose-like carbohydrates. Interacts (via C-type lectin domain) with CEACAM1 (via Lewis X moieties); this interaction is regulated by the glycosylation pattern of CEACAM1 on cell types and regulates contact between dendritic cells and neutrophils.

Its subcellular location is the membrane. Pathogen-recognition receptor expressed on the surface of immature dendritic cells (DCs) and involved in initiation of primary immune response. Thought to mediate the endocytosis of pathogens which are subsequently degraded in lysosomal compartments. The receptor returns to the cell membrane surface and the pathogen-derived antigens are presented to resting T-cells via MHC class II proteins to initiate the adaptive immune response. Probably recognizes in a calcium-dependent manner high mannose N-linked oligosaccharides in a variety of pathogen antigens. Functionally, on DCs it is a high affinity receptor for ICAM2 and ICAM3 by binding to mannose-like carbohydrates. May act as a DC rolling receptor that mediates transendothelial migration of DC presursors from blood to tissues by binding endothelial ICAM2. Seems to regulate DC-induced T-cell proliferation by binding to ICAM3 on T-cells in the immunological synapse formed between DC and T-cells. This chain is CD209 antigen (CD209), found in Macaca mulatta (Rhesus macaque).